We begin with the raw amino-acid sequence, 152 residues long: Homeobox protein ceh-63 (152 aa).

Polar residues predominate over residues 21–30 (NDTNSSQQIK). 2 disordered regions span residues 21-48 (NDTN…RTTF) and 92-126 (RRTK…SQHV). Positions 35 to 44 (PPKRSNRPTK) are enriched in basic residues. Positions 41-100 (RPTKRTTFTSEQVTLLELEFAKNEYICKDRRGELAQTIELTECQVKTWFQNRRTKKRRCT) form a DNA-binding region, homeobox. A compositionally biased stretch (polar residues) spans 116 to 126 (PSPQNPSSQHV).

In terms of assembly, may interact with homeobox protein ceh-14.

The protein resides in the nucleus. Functionally, probable transcription factor, modulating expression of helix-loop-helix protein mbr-1, perhaps acting in concert with homeobox protein ceh-14. May play a minor role in axon guidance in the DVC interneuron. This chain is Homeobox protein ceh-63, found in Caenorhabditis elegans.